The sequence spans 421 residues: AP-3 complex subunit mu (421 aa).

The MHD domain occupies 178-420; it reads QNKIFFDIIE…TTKAGKFQVR (243 aa).

This sequence belongs to the adaptor complexes medium subunit family. Adaptor protein complex 3 (AP-3) is a heterotetramer composed of two large adaptins (delta-type subunit and beta-type subunit), a medium adaptin (mu-type subunit) and a small adaptin (sigma-type subunit).

The protein localises to the endosome membrane. Part of the AP-3 complex, an adaptor-related complex which is essential for the compartmentalization of the endocytic pathway. In Dictyostelium discoideum (Social amoeba), this protein is AP-3 complex subunit mu (apm3).